Here is a 905-residue protein sequence, read N- to C-terminus: Heme/hemopexin-binding protein (905 aa).

Positions 1 to 21 are cleaved as a signal peptide; sequence MYKLNVISLIILTTYTGATYA.

The protein resides in the secreted. In terms of biological role, binds heme/hemopexin complexes. In Haemophilus influenzae (strain ATCC 51907 / DSM 11121 / KW20 / Rd), this protein is Heme/hemopexin-binding protein (hxuA).